The following is a 215-amino-acid chain: Ribonuclease T (215 aa).

An Exonuclease domain is found at 20-194 (VVIDVETAGF…YDTERTAVLF (175 aa)). 4 residues coordinate Mg(2+): Asp23, Glu25, His181, and Asp186. The active-site Proton donor/acceptor is the His181.

Belongs to the RNase T family. In terms of assembly, homodimer. Mg(2+) is required as a cofactor.

Trims short 3' overhangs of a variety of RNA species, leaving a one or two nucleotide 3' overhang. Responsible for the end-turnover of tRNA: specifically removes the terminal AMP residue from uncharged tRNA (tRNA-C-C-A). Also appears to be involved in tRNA biosynthesis. The protein is Ribonuclease T of Salmonella paratyphi A (strain ATCC 9150 / SARB42).